Here is a 510-residue protein sequence, read N- to C-terminus: GMP synthase [glutamine-hydrolyzing] (510 aa).

Positions 5-195 (LVFIIDFGGQ…LFNICELKGD (191 aa)) constitute a Glutamine amidotransferase type-1 domain. The active-site Nucleophile is C82. Active-site residues include H169 and E171. The region spanning 196 to 385 (WSVTSFAEEK…LGIPHKLVWR (190 aa)) is the GMPS ATP-PPase domain. 223 to 229 (SGGVDSS) is an ATP binding site.

Homodimer.

The enzyme catalyses XMP + L-glutamine + ATP + H2O = GMP + L-glutamate + AMP + diphosphate + 2 H(+). Its pathway is purine metabolism; GMP biosynthesis; GMP from XMP (L-Gln route): step 1/1. In terms of biological role, catalyzes the synthesis of GMP from XMP. This Clostridium tetani (strain Massachusetts / E88) protein is GMP synthase [glutamine-hydrolyzing].